The chain runs to 606 residues: Threonine--tRNA ligase (606 aa).

The segment at 212–503 (DHRKLGVEMK…LIEHTAGELP (292 aa)) is catalytic. Residues Cys304, His355, and His480 each coordinate Zn(2+).

This sequence belongs to the class-II aminoacyl-tRNA synthetase family. As to quaternary structure, homodimer. Zn(2+) serves as cofactor.

The protein localises to the cytoplasm. It carries out the reaction tRNA(Thr) + L-threonine + ATP = L-threonyl-tRNA(Thr) + AMP + diphosphate + H(+). Catalyzes the attachment of threonine to tRNA(Thr) in a two-step reaction: L-threonine is first activated by ATP to form Thr-AMP and then transferred to the acceptor end of tRNA(Thr). Also edits incorrectly charged L-seryl-tRNA(Thr). This is Threonine--tRNA ligase from Campylobacter curvus (strain 525.92).